The sequence spans 78 residues: Protein EcdD (78 aa).

Functionally, involved in the non-oxidative decarboxylation and detoxification of phenolic derivatives under anaerobic conditions, however the precise biochemical function in metabolism of phenolic acid is unknown. This Escherichia coli O157:H7 protein is Protein EcdD.